The sequence spans 245 residues: Protein crossbronx (245 aa).

Residues 20–177 form the UBC core domain; it reads HQEYKILAEY…VQESIAESKA (158 aa).

It belongs to the ubiquitin-conjugating enzyme family. FTS subfamily.

The polypeptide is Protein crossbronx (cbx) (Drosophila mojavensis (Fruit fly)).